We begin with the raw amino-acid sequence, 210 residues long: Probable GTP-binding protein EngB (210 aa).

Positions 25 to 199 (CGIEVAFAGR…RQKLDSWFSE (175 aa)) constitute an EngB-type G domain. GTP is bound by residues 33–40 (GRSNAGKS), 60–64 (GRTQL), 78–81 (DLPG), 145–148 (TKAD), and 178–180 (FSS). The Mg(2+) site is built by Ser40 and Thr62.

This sequence belongs to the TRAFAC class TrmE-Era-EngA-EngB-Septin-like GTPase superfamily. EngB GTPase family. Requires Mg(2+) as cofactor.

Its function is as follows. Necessary for normal cell division and for the maintenance of normal septation. The sequence is that of Probable GTP-binding protein EngB from Salmonella dublin (strain CT_02021853).